A 151-amino-acid chain; its full sequence is Superoxide dismutase [Cu-Zn] (151 aa).

Cys6 is lipidated: S-palmitoyl cysteine. Cu cation-binding residues include His45, His47, and His62. The cysteines at positions 56 and 144 are disulfide-linked. Zn(2+)-binding residues include His62, His70, His79, and Asp82. His118 provides a ligand contact to Cu cation.

It belongs to the Cu-Zn superoxide dismutase family. In terms of assembly, homodimer. Requires Cu cation as cofactor. It depends on Zn(2+) as a cofactor.

It localises to the cytoplasm. Its subcellular location is the nucleus. It catalyses the reaction 2 superoxide + 2 H(+) = H2O2 + O2. In terms of biological role, destroys radicals which are normally produced within the cells and which are toxic to biological systems. In Xenopus tropicalis (Western clawed frog), this protein is Superoxide dismutase [Cu-Zn] (sod1).